A 181-amino-acid polypeptide reads, in one-letter code: GATA zinc finger domain-containing protein 22 (181 aa).

A GATA-type zinc finger spans residues 118-145 (CQICLTNNTPYWRWSVIENNKIRVCNRC).

The sequence is that of GATA zinc finger domain-containing protein 22 (gtaV) from Dictyostelium discoideum (Social amoeba).